We begin with the raw amino-acid sequence, 355 residues long: Glycerol-3-phosphate dehydrogenase [NAD(P)+] (355 aa).

The NADPH site is built by Ser14, Trp15, Arg35, and Lys117. Sn-glycerol 3-phosphate is bound by residues Lys117, Gly147, and Ser149. Ala151 lines the NADPH pocket. Residues Lys202, Asp255, Ser265, Arg266, and Asn267 each contribute to the sn-glycerol 3-phosphate site. Catalysis depends on Lys202, which acts as the Proton acceptor. NADPH is bound at residue Arg266. NADPH is bound by residues Ile290 and Glu292.

Belongs to the NAD-dependent glycerol-3-phosphate dehydrogenase family.

It is found in the cytoplasm. The enzyme catalyses sn-glycerol 3-phosphate + NAD(+) = dihydroxyacetone phosphate + NADH + H(+). The catalysed reaction is sn-glycerol 3-phosphate + NADP(+) = dihydroxyacetone phosphate + NADPH + H(+). It functions in the pathway membrane lipid metabolism; glycerophospholipid metabolism. In terms of biological role, catalyzes the reduction of the glycolytic intermediate dihydroxyacetone phosphate (DHAP) to sn-glycerol 3-phosphate (G3P), the key precursor for phospholipid synthesis. This chain is Glycerol-3-phosphate dehydrogenase [NAD(P)+], found in Lawsonia intracellularis (strain PHE/MN1-00).